The following is a 310-amino-acid chain: tRNA pseudouridine synthase B (310 aa).

Residue aspartate 49 is the Nucleophile of the active site.

This sequence belongs to the pseudouridine synthase TruB family. Type 1 subfamily.

The catalysed reaction is uridine(55) in tRNA = pseudouridine(55) in tRNA. Its function is as follows. Responsible for synthesis of pseudouridine from uracil-55 in the psi GC loop of transfer RNAs. This chain is tRNA pseudouridine synthase B, found in Rhizobium etli (strain ATCC 51251 / DSM 11541 / JCM 21823 / NBRC 15573 / CFN 42).